A 347-amino-acid polypeptide reads, in one-letter code: Transcription factor JunB (347 aa).

Glycyl lysine isopeptide (Lys-Gly) (interchain with G-Cter in SUMO2) cross-links involve residues lysine 4, lysine 33, and lysine 36. Residues 51 to 73 (KAPGARGPGPEGGGGGSYFSGQG) are disordered. Gly residues predominate over residues 56-68 (RGPGPEGGGGGSY). Lysine 81 participates in a covalent cross-link: Glycyl lysine isopeptide (Lys-Gly) (interchain with G-Cter in SUMO2). 2 positions are modified to phosphothreonine: threonine 102 and threonine 104. Serine 117 is subject to Phosphoserine. A Glycyl lysine isopeptide (Lys-Gly) (interchain with G-Cter in SUMO2) cross-link involves residue lysine 141. Residues 239 to 253 (FKEEPQTVPEARSRD) are compositionally biased toward basic and acidic residues. The interval 239–260 (FKEEPQTVPEARSRDATPPVSP) is disordered. Residue lysine 240 is modified to N6-acetyllysine; alternate. A Glycyl lysine isopeptide (Lys-Gly) (interchain with G-Cter in SUMO1); alternate cross-link involves residue lysine 240. Lysine 240 participates in a covalent cross-link: Glycyl lysine isopeptide (Lys-Gly) (interchain with G-Cter in SUMO2); alternate. Serine 251 is modified (phosphoserine). A Phosphothreonine modification is found at threonine 255. Position 259 is a phosphoserine (serine 259). The segment at 268-295 (RIKVERKRLRNRLAATKCRKRKLERIAR) is basic motif. Positions 268-331 (RIKVERKRLR…AQLKQKVMTH (64 aa)) constitute a bZIP domain. Positions 296–324 (LEDKVKTLKAENAGLSSTAGLLREQVAQL) are leucine-zipper. Residue lysine 343 forms a Glycyl lysine isopeptide (Lys-Gly) (interchain with G-Cter in SUMO2) linkage.

It belongs to the bZIP family. Jun subfamily. Binds DNA as a homodimer or as a heterodimer with another member of the Jun/Fos family. Component of an AP-1 transcription factor complex composed of JUN-FOS heterodimers composed of JUN-FOS heterodimers. As part of the AP-1 transcription factor complex, forms heterodimers with FOSB, thereby binding to the AP-1 consensus sequence and stimulating transcription. Interacts with ITCH (via its WW domains). Post-translationally, ubiquitinated by ITCH, leading to its degradation.

The protein localises to the nucleus. Transcription factor involved in regulating gene activity following the primary growth factor response. Binds to the DNA sequence 5'-TGA[GC]TCA-3'. Heterodimerizes with proteins of the FOS family to form an AP-1 transcription complex, thereby enhancing its DNA binding activity to an AP-1 consensus sequence and its transcriptional activity. The protein is Transcription factor JunB (JUNB) of Homo sapiens (Human).